We begin with the raw amino-acid sequence, 212 residues long: Large ribosomal subunit protein uL3 (212 aa).

The protein belongs to the universal ribosomal protein uL3 family. In terms of assembly, part of the 50S ribosomal subunit. Forms a cluster with proteins L14 and L19.

Its function is as follows. One of the primary rRNA binding proteins, it binds directly near the 3'-end of the 23S rRNA, where it nucleates assembly of the 50S subunit. This chain is Large ribosomal subunit protein uL3, found in Acetivibrio thermocellus (strain ATCC 27405 / DSM 1237 / JCM 9322 / NBRC 103400 / NCIMB 10682 / NRRL B-4536 / VPI 7372) (Clostridium thermocellum).